A 446-amino-acid chain; its full sequence is Adenylosuccinate synthetase (446 aa).

GTP contacts are provided by residues 20 to 26 (GDEGKGK) and 48 to 50 (GHT). Aspartate 21 functions as the Proton acceptor in the catalytic mechanism. Mg(2+)-binding residues include aspartate 21 and glycine 48. Residues 21-24 (DEGK), 46-49 (NAGH), threonine 137, arginine 151, glutamine 232, threonine 247, and arginine 319 contribute to the IMP site. Histidine 49 serves as the catalytic Proton donor. A substrate-binding site is contributed by 315-321 (SVTGRPR). Residues arginine 321, 347–349 (KLD), and 429–431 (STG) contribute to the GTP site.

The protein belongs to the adenylosuccinate synthetase family. Homodimer. Requires Mg(2+) as cofactor.

Its subcellular location is the cytoplasm. It carries out the reaction IMP + L-aspartate + GTP = N(6)-(1,2-dicarboxyethyl)-AMP + GDP + phosphate + 2 H(+). It functions in the pathway purine metabolism; AMP biosynthesis via de novo pathway; AMP from IMP: step 1/2. Plays an important role in the de novo pathway of purine nucleotide biosynthesis. Catalyzes the first committed step in the biosynthesis of AMP from IMP. This Polynucleobacter asymbioticus (strain DSM 18221 / CIP 109841 / QLW-P1DMWA-1) (Polynucleobacter necessarius subsp. asymbioticus) protein is Adenylosuccinate synthetase.